We begin with the raw amino-acid sequence, 511 residues long: Tryptophan 5-halogenase PyrH (511 aa).

G10, A13, S36, V39, I42, V44, and A47 together coordinate FAD. S50 is a binding site for L-tryptophan. K75 is a catalytic residue. Residues P93, Q160, and Q163 each coordinate L-tryptophan. FAD-binding residues include V195 and L345. Chloride is bound by residues T356 and G357. I358 is a binding site for FAD. Residues G450 and Y454 each contribute to the L-tryptophan site.

It belongs to the flavin-dependent halogenase family. Bacterial tryptophan halogenase subfamily. Homodimer.

It catalyses the reaction L-tryptophan + FADH2 + chloride + O2 = 5-chloro-L-tryptophan + FAD + 2 H2O. The protein operates within antibiotic biosynthesis. In terms of biological role, involved in the biosynthesis of the antibiotic compound pyrroindomycin B. Catalyzes the chlorination of tryptophan (Trp) at C5 position to yield 5-chloro-L-tryptophan. It is also able to use bromide ions to generate monobrominated Trp, but the brominating activity is only about 75% of the chlorinating activity. In Streptomyces rugosporus, this protein is Tryptophan 5-halogenase PyrH.